We begin with the raw amino-acid sequence, 103 residues long: Large ribosomal subunit protein uL24 (103 aa).

The protein belongs to the universal ribosomal protein uL24 family. As to quaternary structure, part of the 50S ribosomal subunit.

Functionally, one of two assembly initiator proteins, it binds directly to the 5'-end of the 23S rRNA, where it nucleates assembly of the 50S subunit. Its function is as follows. One of the proteins that surrounds the polypeptide exit tunnel on the outside of the subunit. This chain is Large ribosomal subunit protein uL24 (rplX), found in Bacillus spizizenii (strain ATCC 23059 / NRRL B-14472 / W23) (Bacillus subtilis subsp. spizizenii).